The chain runs to 434 residues: Glutamate-1-semialdehyde 2,1-aminomutase (434 aa).

Residue lysine 274 is modified to N6-(pyridoxal phosphate)lysine.

The protein belongs to the class-III pyridoxal-phosphate-dependent aminotransferase family. HemL subfamily. Homodimer. It depends on pyridoxal 5'-phosphate as a cofactor.

The protein resides in the cytoplasm. It carries out the reaction (S)-4-amino-5-oxopentanoate = 5-aminolevulinate. It participates in porphyrin-containing compound metabolism; protoporphyrin-IX biosynthesis; 5-aminolevulinate from L-glutamyl-tRNA(Glu): step 2/2. The sequence is that of Glutamate-1-semialdehyde 2,1-aminomutase from Acidovorax sp. (strain JS42).